The following is a 296-amino-acid chain: Protease HtpX homolog (296 aa).

A run of 2 helical transmembrane segments spans residues 14 to 34 (VFLL…VGYL) and 38 to 58 (SLVT…VIMI). A Zn(2+)-binding site is contributed by His-144. Residue Glu-145 is part of the active site. Residue His-148 coordinates Zn(2+). 2 consecutive transmembrane segments (helical) span residues 159–179 (IALA…NWWL) and 198–218 (LLVF…AAVI). Residue Glu-227 participates in Zn(2+) binding.

This sequence belongs to the peptidase M48B family. It depends on Zn(2+) as a cofactor.

It is found in the cell membrane. This Leuconostoc citreum (strain KM20) protein is Protease HtpX homolog.